Here is a 396-residue protein sequence, read N- to C-terminus: Obg-like ATPase 1 (396 aa).

One can recognise an OBG-type G domain in the interval 23–283 (LKIGIVGLPN…LSAEERQKYL (261 aa)). 32–37 (NVGKST) serves as a coordination point for ATP. Residues Ser36 and Thr56 each contribute to the Mg(2+) site. Leu231 contributes to the ATP binding site. A Nuclear export signal motif is present at residues 267 to 274 (LELRLQEL). Lys294 is modified (N6-acetyllysine). The region spanning 304 to 387 (QLEYFFTAGP…EDGDIIFFKF (84 aa)) is the TGS domain.

It belongs to the TRAFAC class OBG-HflX-like GTPase superfamily. OBG GTPase family. YchF/OLA1 subfamily. Monomer. Mg(2+) is required as a cofactor.

It is found in the cytoplasm. The protein localises to the nucleus. The protein resides in the nucleolus. In terms of biological role, hydrolyzes ATP, and can also hydrolyze GTP with lower efficiency. Has lower affinity for GTP. This is Obg-like ATPase 1 from Bos taurus (Bovine).